A 278-amino-acid polypeptide reads, in one-letter code: Phosphatidylglycerol--prolipoprotein diacylglyceryl transferase (278 aa).

4 helical membrane-spanning segments follow: residues 19–39 (WYGI…INEG), 49–69 (FIDF…IYYV), 83–103 (IIAI…GLIV), and 112–132 (MLPP…AQVI). R134 serves as a coordination point for a 1,2-diacyl-sn-glycero-3-phospho-(1'-sn-glycerol). Helical transmembrane passes span 174–194 (QPTY…ILSL), 204–224 (GEVF…VEGM), and 235–255 (IRVS…LWVY).

This sequence belongs to the Lgt family.

Its subcellular location is the cell membrane. The enzyme catalyses L-cysteinyl-[prolipoprotein] + a 1,2-diacyl-sn-glycero-3-phospho-(1'-sn-glycerol) = an S-1,2-diacyl-sn-glyceryl-L-cysteinyl-[prolipoprotein] + sn-glycerol 1-phosphate + H(+). It participates in protein modification; lipoprotein biosynthesis (diacylglyceryl transfer). In terms of biological role, catalyzes the transfer of the diacylglyceryl group from phosphatidylglycerol to the sulfhydryl group of the N-terminal cysteine of a prolipoprotein, the first step in the formation of mature lipoproteins. This chain is Phosphatidylglycerol--prolipoprotein diacylglyceryl transferase, found in Lactobacillus gasseri (strain ATCC 33323 / DSM 20243 / BCRC 14619 / CIP 102991 / JCM 1131 / KCTC 3163 / NCIMB 11718 / NCTC 13722 / AM63).